The following is a 255-amino-acid chain: Probable membrane transporter protein HI_0198 (255 aa).

8 consecutive transmembrane segments (helical) span residues 7-27 (LLAILFCVGFVASFIDAIAGG), 28-48 (GGLITIPALLMTGMPPAMALG), 76-96 (IWFILIWVFLGSALGTLLIQS), 99-119 (VAIFKKMLPFLILAIGLYFLF), 132-152 (LSYLLFGLLVSPFLGFYDGFF), 153-173 (GPGTGSIMSLACVTLLGFNLP), 191-211 (FALFLLGGQILWKVGFVMMAG), and 235-255 (VVIMSFMMTAKMVYDQGWFHF).

This sequence belongs to the 4-toluene sulfonate uptake permease (TSUP) (TC 2.A.102) family.

The protein localises to the cell membrane. In Haemophilus influenzae (strain ATCC 51907 / DSM 11121 / KW20 / Rd), this protein is Probable membrane transporter protein HI_0198.